Reading from the N-terminus, the 209-residue chain is Probable peptide export ATP-binding protein YydI (209 aa).

One can recognise an ABC transporter domain in the interval 1-207; the sequence is MNIANYTLKV…SVDKLIEVYI (207 aa). 33–40 serves as a coordination point for ATP; it reads GKNGVGKS.

The protein belongs to the ABC transporter superfamily. As to quaternary structure, the complex is composed of two ATP-binding proteins (YydI), two transmembrane proteins (YydJ).

Functionally, suggested to be part of an ABC transporter complex YydIJ involved in export of the modified peptide YydF. Responsible for energy coupling to the transport system. The protein is Probable peptide export ATP-binding protein YydI (yydI) of Bacillus subtilis (strain 168).